Reading from the N-terminus, the 107-residue chain is U1-lycotoxin-Ls1b (107 aa).

A signal peptide spans 1 to 20 (MMKVLVVIALLVTLISYSSS). The propeptide occupies 21–41 (EGIDDLEADELLSLMANEQTR). Disulfide bonds link cysteine 44–cysteine 59, cysteine 51–cysteine 68, cysteine 58–cysteine 86, and cysteine 70–cysteine 84.

This sequence belongs to the neurotoxin 19 (CSTX) family. 04 (U1-Lctx) subfamily. In terms of tissue distribution, expressed by the venom gland.

It localises to the secreted. In Lycosa singoriensis (Wolf spider), this protein is U1-lycotoxin-Ls1b.